Consider the following 358-residue polypeptide: Nuclear receptor subfamily 1 group I member 3 (358 aa).

The segment at residues 18–93 (PRNCVVCGDR…VGMRKDMILS (76 aa)) is a DNA-binding region (nuclear receptor). The NR C4-type zinc-finger motif lies at 21-41 (CVVCGDRATGYHFHALTCEGC). Threonine 48 is subject to Phosphothreonine; by PKC. The NR C4-type zinc finger occupies 57–81 (CPFAGRCEVSKAQRRHCPACRLQKC). Residues 119 to 358 (QQKELVQILL…MTPLLGEICS (240 aa)) enclose the NR LBD domain.

It belongs to the nuclear hormone receptor family. NR1 subfamily. As to quaternary structure, heterodimer of NR1I3 and RXR. Interacts with PSMC4. Interacts with ECT2. Directly interacts with DNAJC7; this complex may also include HSP90. Interacts with CRY1. Interacts with CRY2 in a ligand-dependent manner. In terms of processing, phosphorylated at Thr-48 by PKC, dephosphorylation of Thr-48 is required for nuclear translocation and activation. Predominantly expressed in liver.

The protein resides in the nucleus. It localises to the cytoplasm. Its subcellular location is the cytoskeleton. Its function is as follows. Binds and transactivates the retinoic acid response elements that control expression of the retinoic acid receptor beta 2 and alcohol dehydrogenase 3 genes. Transactivates both the phenobarbital responsive element module of the human CYP2B6 gene and the CYP3A4 xenobiotic response element. This Mus musculus (Mouse) protein is Nuclear receptor subfamily 1 group I member 3 (Nr1i3).